The primary structure comprises 286 residues: Phycobilisome 31.8 kDa linker polypeptide, phycoerythrin-associated, rod (286 aa).

The 178-residue stretch at 2–179 (PFGPASRLGV…LVRGASSSSL (178 aa)) folds into the PBS-linker domain. The CpcD-like domain occupies 231–286 (GKVYRIEVTGYRAKTFNNISKFRRSNQVFLVPYEKLSQEYQRIHQQGGVIASITPV).

Belongs to the phycobilisome linker protein family. As to quaternary structure, the phycobilisome is a hemidiscoidal structure that is composed of two distinct substructures: a core complex and six rods radiating from the core.

Its subcellular location is the cellular thylakoid membrane. Functionally, rod linker protein, associated with phycoerythrocyanin. Linker polypeptides determine the state of aggregation and the location of the disk-shaped phycobiliprotein units within the phycobilisome and modulate their spectroscopic properties in order to mediate a directed and optimal energy transfer. The chain is Phycobilisome 31.8 kDa linker polypeptide, phycoerythrin-associated, rod (cpeC) from Microchaete diplosiphon (Fremyella diplosiphon).